We begin with the raw amino-acid sequence, 295 residues long: Giardin subunit alpha-1 (295 aa).

Annexin repeat units follow at residues 2-71, 73-143, 153-223, and 226-293; these read PKVT…MDLF, DRHE…MEKW, GSPE…AHFA, and GMHR…TLWR.

Belongs to the annexin family. Giardin subunit alpha subfamily.

It localises to the cytoplasm. The protein localises to the cytoskeleton. Functionally, giardins are involved in parasite attachment to the intestinal mucosa and in the cytoskeletal disassembly and reassembly that marks the transition from infectious trophozoite to transmissible cyst. They may interact with other cytoskeletal proteins such as microtubules in the microribbons or crossbridges, to maintain the integrity of the ventral disk. This is Giardin subunit alpha-1 from Giardia intestinalis (Giardia lamblia).